The chain runs to 396 residues: Phosphoglycerate kinase (396 aa).

Residues 21–23 (DIN), Arg-36, 59–62 (HFGR), Arg-114, and Arg-147 contribute to the substrate site. ATP is bound by residues Lys-197, Glu-319, and 349-352 (GGDT).

It belongs to the phosphoglycerate kinase family. In terms of assembly, monomer.

The protein localises to the cytoplasm. The catalysed reaction is (2R)-3-phosphoglycerate + ATP = (2R)-3-phospho-glyceroyl phosphate + ADP. The protein operates within carbohydrate degradation; glycolysis; pyruvate from D-glyceraldehyde 3-phosphate: step 2/5. The chain is Phosphoglycerate kinase from Jannaschia sp. (strain CCS1).